Reading from the N-terminus, the 400-residue chain is S-adenosylmethionine synthase (400 aa).

An ATP-binding site is contributed by 137–142; sequence GEGSGD.

This sequence belongs to the AdoMet synthase 2 family. Mg(2+) serves as cofactor.

The enzyme catalyses L-methionine + ATP + H2O = S-adenosyl-L-methionine + phosphate + diphosphate. The protein operates within amino-acid biosynthesis; S-adenosyl-L-methionine biosynthesis; S-adenosyl-L-methionine from L-methionine: step 1/1. Catalyzes the formation of S-adenosylmethionine from methionine and ATP. This is S-adenosylmethionine synthase from Haloarcula marismortui (strain ATCC 43049 / DSM 3752 / JCM 8966 / VKM B-1809) (Halobacterium marismortui).